A 521-amino-acid polypeptide reads, in one-letter code: Cytochrome P450 52A9 (521 aa).

Residue Cys468 coordinates heme.

Belongs to the cytochrome P450 family. Requires heme as cofactor.

The protein resides in the membrane. Its function is as follows. Together with an NADPH cytochrome P450 the enzyme system catalyzes the terminal hydroxylation as the first step in the assimilation of alkanes and fatty acids. The polypeptide is Cytochrome P450 52A9 (CYP52A9) (Candida maltosa (Yeast)).